The chain runs to 156 residues: Riboflavin synthase (156 aa).

The protein belongs to the DMRL synthase family.

It carries out the reaction 2 6,7-dimethyl-8-(1-D-ribityl)lumazine + H(+) = 5-amino-6-(D-ribitylamino)uracil + riboflavin. It participates in cofactor biosynthesis; riboflavin biosynthesis; riboflavin from 2-hydroxy-3-oxobutyl phosphate and 5-amino-6-(D-ribitylamino)uracil: step 2/2. The sequence is that of Riboflavin synthase (ribC) from Methanocaldococcus jannaschii (strain ATCC 43067 / DSM 2661 / JAL-1 / JCM 10045 / NBRC 100440) (Methanococcus jannaschii).